A 293-amino-acid chain; its full sequence is MHMQLRKRKRVDYSGRNQTSDPPSTTTAAVPSIIVPKKRKVVAQNMVSPAIRATTTTLGTSNIIIPKPLQRPKFHNSASLSSPDDDPEKISVLEVQKNLSNLIKRQQRLFYKDIHKPTLAGLKNFEMLRLPNDLKLLQNIVNLLYSFEQLNSDSKTRPVTTSKLKASSQAHSDKLKKMLAERKPPFSHPSHSGTAYHNDIIHEIANLHSINLVDLINLEVYNNNCHTNNTALQTTANSLTLNSIIKKLDKPILKERNNSLVWPHKSRFKAKRNQPSPGQSLINNTDITLYNDV.

Basic residues predominate over residues 1 to 10 (MHMQLRKRKR). Residues 1-28 (MHMQLRKRKRVDYSGRNQTSDPPSTTTA) form a disordered region. Residues 15–28 (GRNQTSDPPSTTTA) show a composition bias toward polar residues.

The protein localises to the nucleus. This is an uncharacterized protein from Saccharomyces cerevisiae (strain ATCC 204508 / S288c) (Baker's yeast).